A 373-amino-acid chain; its full sequence is Chorismate synthase (373 aa).

Arg-46 lines the NADP(+) pocket. FMN contacts are provided by residues 123–125 (RSS), 251–252 (NA), Gly-295, 310–314 (KPTPS), and Arg-337.

Belongs to the chorismate synthase family. Requires FMNH2 as cofactor.

It catalyses the reaction 5-O-(1-carboxyvinyl)-3-phosphoshikimate = chorismate + phosphate. It functions in the pathway metabolic intermediate biosynthesis; chorismate biosynthesis; chorismate from D-erythrose 4-phosphate and phosphoenolpyruvate: step 7/7. Its function is as follows. Catalyzes the anti-1,4-elimination of the C-3 phosphate and the C-6 proR hydrogen from 5-enolpyruvylshikimate-3-phosphate (EPSP) to yield chorismate, which is the branch point compound that serves as the starting substrate for the three terminal pathways of aromatic amino acid biosynthesis. This reaction introduces a second double bond into the aromatic ring system. The sequence is that of Chorismate synthase from Methanococcus maripaludis (strain C5 / ATCC BAA-1333).